Reading from the N-terminus, the 760-residue chain is Catecholate siderophore receptor Fiu (760 aa).

The first 31 residues, 1 to 31 (MENNRNFPARQFHSLTFFAGLCIGITPVAQA), serve as a signal peptide directing secretion. A TBDR plug domain is found at 67 to 175 (PVADTTRTMT…PTGSINMISK (109 aa)). The TBDR beta-barrel domain occupies 180–760 (DSGIDASASI…TFLLTANMHF (581 aa)). Residues 743 to 760 (RYHPGEPRTFLLTANMHF) carry the TonB C-terminal box motif.

The protein belongs to the TonB-dependent receptor family.

The protein localises to the cell outer membrane. Its function is as follows. Involved in the active transport across the outer membrane of iron complexed with catecholate siderophores such as dihydroxybenzoylserine and dihydroxybenzoate. It derives its energy for transport by interacting with the trans-periplasmic membrane protein TonB. Can also transport catechol-substituted cephalosporins. Receptor for microcins M, H47 and E492. This Escherichia coli (strain K12) protein is Catecholate siderophore receptor Fiu (fiu).